A 520-amino-acid chain; its full sequence is Maturase K (520 aa).

The protein belongs to the intron maturase 2 family. MatK subfamily.

It localises to the plastid. Its subcellular location is the chloroplast. Functionally, usually encoded in the trnK tRNA gene intron. Probably assists in splicing its own and other chloroplast group II introns. In Beaucarnea recurvata (Elephant-foot tree), this protein is Maturase K.